The primary structure comprises 357 residues: 3-isopropylmalate dehydrogenase (357 aa).

Substrate contacts are provided by Arg97, Arg107, Arg135, and Asp224. The Mg(2+) site is built by Asp224, Asp248, and Asp252. 282–294 (GSAPDIAGQDLAN) contributes to the NAD(+) binding site.

This sequence belongs to the isocitrate and isopropylmalate dehydrogenases family. LeuB type 1 subfamily. As to quaternary structure, homodimer. Mg(2+) is required as a cofactor. The cofactor is Mn(2+).

Its subcellular location is the cytoplasm. It catalyses the reaction (2R,3S)-3-isopropylmalate + NAD(+) = 4-methyl-2-oxopentanoate + CO2 + NADH. The protein operates within amino-acid biosynthesis; L-leucine biosynthesis; L-leucine from 3-methyl-2-oxobutanoate: step 3/4. Functionally, catalyzes the oxidation of 3-carboxy-2-hydroxy-4-methylpentanoate (3-isopropylmalate) to 3-carboxy-4-methyl-2-oxopentanoate. The product decarboxylates to 4-methyl-2 oxopentanoate. In Prochlorococcus marinus (strain MIT 9313), this protein is 3-isopropylmalate dehydrogenase.